Here is a 413-residue protein sequence, read N- to C-terminus: Protein FAM8A1 (413 aa).

Residues 1-10 are compositionally biased toward basic and acidic residues; it reads MAEGPEEARG. Positions 1–105 are disordered; the sequence is MAEGPEEARG…PEAAAPRERP (105 aa). The span at 49-64 shows a compositional bias: low complexity; that stretch reads APGRPTAPGLAAAAAA. A compositionally biased stretch (basic and acidic residues) spans 65–78; it reads DKLEPPRELRKRGE. Positions 107–139 are necessary and sufficient to interact with SYVN1; sequence RLSAREYSRQVHEWLWQSYCGYLTWHSGLAAFP. Residues 217-236 are disordered; it reads PVTRVGSAAPSRSPSETGRQ. Residue S229 is modified to Phosphoserine. In terms of domain architecture, RDD spans 242–408; sequence VIPSLAHRFM…DIVAGTIVVK (167 aa). 3 helical membrane-spanning segments follow: residues 257–277, 304–324, and 371–391; these read FFILFFIKATIVLSIMHLSGI, MMVVALIYRLLVCFYEIICIW, and ALIKNFSIASFFPAFITLLFF.

As to quaternary structure, component of the HRD1 complex, which comprises at least SYNV1/HRD1, FAM8A1, HERPUD1/HERP, OS9, SEL1L and UBE2J1. This interaction stabilizes FAM8A1 protein, preventing its proteasomal degradation. FAM8A1 binding to SYNV1 may promote recruitment of HERPUD1 to the HRD1 complex. In terms of tissue distribution, ubiquitously expressed, with a higher level of expression in testis.

The protein localises to the membrane. Plays a role in the assembly of the HRD1 complex, a complex involved in the ubiquitin-proteasome-dependent process of ER-associated degradation (ERAD). This is Protein FAM8A1 (FAM8A1) from Homo sapiens (Human).